We begin with the raw amino-acid sequence, 284 residues long: uncharacterized protein (284 aa).

An N-terminal signal peptide occupies residues 1 to 23 (MKRGCAIAVMICGLITSVSAASA).

It belongs to the surface antigen msp4 family.

This is an uncharacterized protein from Brucella melitensis biotype 1 (strain ATCC 23456 / CCUG 17765 / NCTC 10094 / 16M).